The chain runs to 515 residues: Glucose-6-phosphate 1-dehydrogenase (515 aa).

Ala2 is modified (N-acetylalanine). Ser8 is modified (phosphoserine). Thr10 carries the phosphothreonine modification. NADP(+) contacts are provided by residues 38–45 (GASGDLAK) and Arg72. At Lys89 the chain carries N6-acetyllysine. NADP(+) is bound by residues Tyr147 and Lys171. Residues Lys171, 201–205 (HYLGK), Glu239, and Asp258 contribute to the D-glucose 6-phosphate site. Lys171 carries the post-translational modification N6-(2-hydroxyisobutyryl)lysine; alternate. At Lys171 the chain carries N6-acetyllysine; alternate. His263 functions as the Proton acceptor in the catalytic mechanism. Arg357 lines the NADP(+) pocket. D-glucose 6-phosphate is bound by residues Lys360 and Arg365. Residues Lys366, Arg370, and Arg393 each coordinate NADP(+). D-glucose 6-phosphate is bound at residue Gln395. NADP(+) contacts are provided by residues 401–403 (YTK) and 421–423 (DLT). Position 403 is an N6-acetyllysine (Lys403). At Lys432 the chain carries N6-acetyllysine. Arg487 contacts NADP(+). At Lys497 the chain carries N6-acetyllysine. NADP(+) contacts are provided by Tyr503 and Trp509. The residue at position 503 (Tyr503) is a Phosphotyrosine.

Belongs to the glucose-6-phosphate dehydrogenase family. As to quaternary structure, homotetramer; dimer of dimers. Interacts with SIRT2; the interaction is enhanced by H(2)O(2) treatment. Forms a ternary complex with ALDOB and TP53; this interaction is direct. ALDOB stabilizes the complex inhibiting G6PD activity and keeping oxidative pentose phosphate metabolism in check. Post-translationally, acetylated by ELP3 at Lys-403; acetylation inhibits its homodimerization and enzyme activity. Deacetylated by SIRT2 at Lys-403; deacetylation stimulates its enzyme activity.

It is found in the cytoplasm. The protein localises to the cytosol. The protein resides in the membrane. It catalyses the reaction D-glucose 6-phosphate + NADP(+) = 6-phospho-D-glucono-1,5-lactone + NADPH + H(+). Its pathway is carbohydrate degradation; pentose phosphate pathway; D-ribulose 5-phosphate from D-glucose 6-phosphate (oxidative stage): step 1/3. Its function is as follows. Cytosolic glucose-6-phosphate dehydrogenase that catalyzes the first and rate-limiting step of the oxidative branch within the pentose phosphate pathway/shunt, an alternative route to glycolysis for the dissimilation of carbohydrates and a major source of reducing power and metabolic intermediates for fatty acid and nucleic acid biosynthetic processes. The chain is Glucose-6-phosphate 1-dehydrogenase (G6pdx) from Rattus norvegicus (Rat).